Consider the following 241-residue polypeptide: ATP synthase subunit a (241 aa).

6 helical membrane-spanning segments follow: residues 19–39 (AVLI…AKMA), 80–100 (LVAA…IPGF), 106–126 (NINV…YEGI), 135–155 (FAHF…IEIV), 177–197 (LFLW…AYLL), and 203–223 (LLQT…AVAI).

Belongs to the ATPase A chain family. In terms of assembly, F-type ATPases have 2 components, CF(1) - the catalytic core - and CF(0) - the membrane proton channel. CF(1) has five subunits: alpha(3), beta(3), gamma(1), delta(1), epsilon(1). CF(0) has three main subunits: a(1), b(2) and c(9-12). The alpha and beta chains form an alternating ring which encloses part of the gamma chain. CF(1) is attached to CF(0) by a central stalk formed by the gamma and epsilon chains, while a peripheral stalk is formed by the delta and b chains.

Its subcellular location is the cell inner membrane. Functionally, key component of the proton channel; it plays a direct role in the translocation of protons across the membrane. This is ATP synthase subunit a from Sulfurovum sp. (strain NBC37-1).